The chain runs to 322 residues: Heterogeneous nuclear ribonucleoprotein D-like (322 aa).

A disordered region spans residues 1–36 (MTGTARSALPLPQSPARALRPSGAARAAPSLSPSRF). Position 6 is an omega-N-methylarginine (arginine 6). Residues 14 to 36 (SPARALRPSGAARAAPSLSPSRF) are compositionally biased toward low complexity. RRM domains are found at residues 51 to 133 (NKMF…KGKE) and 136 to 215 (KKVF…QPKE). N6-methyllysine is present on lysine 64. Lysine 112 participates in a covalent cross-link: Glycyl lysine isopeptide (Lys-Gly) (interchain with G-Cter in SUMO2). Lysine 119 carries the N6-acetyllysine modification. Position 144 is a phosphoserine (serine 144). Disordered stretches follow at residues 216 to 251 (VYRQ…NWNQ) and 299 to 322 (SGQQ…YQPY). Residues 226–245 (GGRGAAAGGRGGARGRGRGQ) show a composition bias toward gly residues. Residues 245–322 (QGQNWNQGFN…GNHQNNYQPY (78 aa)) form a necessary for interaction with TNPO1 region. At arginine 310 the chain carries Dimethylated arginine; alternate. Arginine 310 is modified (omega-N-methylarginine; alternate).

In terms of assembly, interacts with TNPO1 and ZNF148. Post-translationally, dimethylation of Arg-310 is probably of the asymmetric type.

The protein resides in the nucleus. Its subcellular location is the cytoplasm. Functionally, acts as a transcriptional regulator. Promotes transcription repression. Promotes transcription activation in differentiated myotubes. Binds to double- and single-stranded DNA sequences. Binds to the transcription suppressor CATR sequence of the COX5B promoter. Binds with high affinity to RNA molecules that contain AU-rich elements (AREs) found within the 3'-UTR of many proto-oncogenes and cytokine mRNAs. Binds both to nuclear and cytoplasmic poly(A) mRNAs. Binds to poly(G) and poly(A), but not to poly(U) or poly(C) RNA homopolymers. Binds to the 5'-ACUAGC-3' RNA consensus sequence. The sequence is that of Heterogeneous nuclear ribonucleoprotein D-like (Hnrnpdl) from Rattus norvegicus (Rat).